Consider the following 84-residue polypeptide: MTDKIRTVQGKVVSDKMDKSFVVAIERTVKHPIYGKFIRRTTKLHVHDENNEAKLGDVVEVKECRPLSKTKSHTLVRVVEKAVA.

Belongs to the universal ribosomal protein uS17 family. Part of the 30S ribosomal subunit.

One of the primary rRNA binding proteins, it binds specifically to the 5'-end of 16S ribosomal RNA. The polypeptide is Small ribosomal subunit protein uS17 (Glaesserella parasuis serovar 5 (strain SH0165) (Haemophilus parasuis)).